Consider the following 113-residue polypeptide: Urease subunit beta (113 aa).

This sequence belongs to the urease beta subunit family. Heterotrimer of UreA (gamma), UreB (beta) and UreC (alpha) subunits. Three heterotrimers associate to form the active enzyme.

The protein resides in the cytoplasm. The catalysed reaction is urea + 2 H2O + H(+) = hydrogencarbonate + 2 NH4(+). It participates in nitrogen metabolism; urea degradation; CO(2) and NH(3) from urea (urease route): step 1/1. This chain is Urease subunit beta, found in Cyanothece sp. (strain PCC 7425 / ATCC 29141).